Here is a 288-residue protein sequence, read N- to C-terminus: 4-diphosphocytidyl-2-C-methyl-D-erythritol kinase (288 aa).

Lysine 13 is a catalytic residue. Position 96 to 106 (96 to 106) interacts with ATP; the sequence is PMGGGIGGGSS. Residue aspartate 138 is part of the active site.

The protein belongs to the GHMP kinase family. IspE subfamily.

The enzyme catalyses 4-CDP-2-C-methyl-D-erythritol + ATP = 4-CDP-2-C-methyl-D-erythritol 2-phosphate + ADP + H(+). Its pathway is isoprenoid biosynthesis; isopentenyl diphosphate biosynthesis via DXP pathway; isopentenyl diphosphate from 1-deoxy-D-xylulose 5-phosphate: step 3/6. Its function is as follows. Catalyzes the phosphorylation of the position 2 hydroxy group of 4-diphosphocytidyl-2C-methyl-D-erythritol. This chain is 4-diphosphocytidyl-2-C-methyl-D-erythritol kinase, found in Aliivibrio fischeri (strain ATCC 700601 / ES114) (Vibrio fischeri).